A 225-amino-acid polypeptide reads, in one-letter code: UPF0758 protein MADE_1000235 (225 aa).

The MPN domain occupies 102-224 (VFNNVDDTKR…TISFAQRGLL (123 aa)). 3 residues coordinate Zn(2+): His-173, His-175, and Asp-186. The JAMM motif motif lies at 173 to 186 (HNHPSGVAEPSHAD).

It belongs to the UPF0758 family.

In Alteromonas mediterranea (strain DSM 17117 / CIP 110805 / LMG 28347 / Deep ecotype), this protein is UPF0758 protein MADE_1000235.